The chain runs to 204 residues: E3 ubiquitin-protein ligase MPSR1 (204 aa).

The RING-type; atypical zinc-finger motif lies at 113–154 (CVICLEEWKSEETVKEMPCKHRFHGGCIEKWLGFHGSCPVCR).

Post-translationally, autoubiquitinated.

The protein resides in the cytoplasm. The catalysed reaction is S-ubiquitinyl-[E2 ubiquitin-conjugating enzyme]-L-cysteine + [acceptor protein]-L-lysine = [E2 ubiquitin-conjugating enzyme]-L-cysteine + N(6)-ubiquitinyl-[acceptor protein]-L-lysine.. Its function is as follows. E3 ubiquitin-protein ligase involved in protein quality control (PQC) under proteotoxic stress. Is essential to plant survival under proteotoxic stress. Functions by removing damaged proteins before they form cytotoxic aggregates. Recognizes misfolded proteins selectively and tethers polyubiquitin chains to the proteins directly for subsequent degradation by the 26S proteasome pathway. Targets misfolded proteins independently of cytoplasmic chaperones. Associates with the 26S proteasome and sustains the structural integrity of the proteasome complex at the initial stage of proteotoxic stress. Under normal conditions, MPSR1 becomes highly unstable by its autoubiquitination activity and is stabilized during proteotoxic stress by conjugating ubiquitins on misfolded proteins. This Arabidopsis thaliana (Mouse-ear cress) protein is E3 ubiquitin-protein ligase MPSR1.